Consider the following 365-residue polypeptide: DNA replication and repair protein RecF (365 aa).

30–37 (GDNAQGKT) serves as a coordination point for ATP.

It belongs to the RecF family.

Its subcellular location is the cytoplasm. Its function is as follows. The RecF protein is involved in DNA metabolism; it is required for DNA replication and normal SOS inducibility. RecF binds preferentially to single-stranded, linear DNA. It also seems to bind ATP. In Alkaliphilus oremlandii (strain OhILAs) (Clostridium oremlandii (strain OhILAs)), this protein is DNA replication and repair protein RecF.